The primary structure comprises 101 residues: Apolipoprotein C-II (101 aa).

Positions 1–22 (MGARHLLALLLVLLVLGFEVQG) are cleaved as a signal peptide. Residues 66 to 74 (TMDEKIRDM) form a lipid binding region. The interval 78 to 101 (STAAVSTYVGIFTDQLLSLLKGDE) is lipoprotein lipase cofactor.

This sequence belongs to the apolipoprotein C2 family. Post-translationally, proapolipoprotein C-II is synthesized as a sialic acid containing glycoprotein which is subsequently desialylated prior to its proteolytic processing. In terms of processing, proapolipoprotein C-II, the major form found in plasma undergoes proteolytic cleavage of its N-terminal hexapeptide to generate apolipoprotein C-II, which occurs as the minor form in plasma.

The protein resides in the secreted. Functionally, component of chylomicrons, very low-density lipoproteins (VLDL), low-density lipoproteins (LDL), and high-density lipoproteins (HDL) in plasma. Plays an important role in lipoprotein metabolism as an activator of lipoprotein lipase. Both proapolipoprotein C-II and apolipoprotein C-II can activate lipoprotein lipase. The chain is Apolipoprotein C-II (APOC2) from Tapirus indicus (Asiatic tapir).